A 345-amino-acid polypeptide reads, in one-letter code: S-adenosylmethionine:tRNA ribosyltransferase-isomerase (345 aa).

This sequence belongs to the QueA family. In terms of assembly, monomer.

Its subcellular location is the cytoplasm. It catalyses the reaction 7-aminomethyl-7-carbaguanosine(34) in tRNA + S-adenosyl-L-methionine = epoxyqueuosine(34) in tRNA + adenine + L-methionine + 2 H(+). Its pathway is tRNA modification; tRNA-queuosine biosynthesis. Its function is as follows. Transfers and isomerizes the ribose moiety from AdoMet to the 7-aminomethyl group of 7-deazaguanine (preQ1-tRNA) to give epoxyqueuosine (oQ-tRNA). The polypeptide is S-adenosylmethionine:tRNA ribosyltransferase-isomerase (Anaeromyxobacter dehalogenans (strain 2CP-C)).